Reading from the N-terminus, the 463-residue chain is MSTGTVVQVIGAVVDVEFPQDAVPQVYDALKITGEGACNGLVLEVQQQLGGGVVRTIAMGSSDGLRRGLEVVNSGSPISVPVGTATLGRIMNVLGEPIDEAGPIGEEERYVIHRAAPSYEDQSNTTELLETGIKVIDLVCPFAKGGKVGLFGGAGVGKTVNMMELINNIAKAHSGLSVFAGVGERTREGNDFYYEMKDSGVLDKVAMVYGQMNEPPGNRLRVALSGLTMAEKFRDEGRDVLLFVDNIYRYTLAGTEVSALLGRMPSAVGYQPTLAEEMGVLQERITSTKTGSITSVQAVYVPADDLTDPSPATTFAHLDATVVLSRQIASLGIYPAVDPLDSTSRQLDPLVVGQEHYDVANGVQTVLQRYKELKDIIAILGMDELSDDDKTTVFRARKIERFLSQPFFVAEVFTGSPGKYVSLKDTIRGFKGILNGEFDHLPEQAFYMVGSIDEVIEKANKKK.

Residue 152-159 (GGAGVGKT) coordinates ATP.

This sequence belongs to the ATPase alpha/beta chains family. F-type ATPases have 2 components, CF(1) - the catalytic core - and CF(0) - the membrane proton channel. CF(1) has five subunits: alpha(3), beta(3), gamma(1), delta(1), epsilon(1). CF(0) has three main subunits: a(1), b(2) and c(9-12). The alpha and beta chains form an alternating ring which encloses part of the gamma chain. CF(1) is attached to CF(0) by a central stalk formed by the gamma and epsilon chains, while a peripheral stalk is formed by the delta and b chains.

The protein localises to the cell inner membrane. The catalysed reaction is ATP + H2O + 4 H(+)(in) = ADP + phosphate + 5 H(+)(out). Produces ATP from ADP in the presence of a proton gradient across the membrane. The catalytic sites are hosted primarily by the beta subunits. The protein is ATP synthase subunit beta of Shewanella putrefaciens (strain CN-32 / ATCC BAA-453).